Reading from the N-terminus, the 55-residue chain is DNA-directed RNA polymerase subunit Rpo10 (55 aa).

Zn(2+) is bound by residues C6, C9, C43, and C44.

Belongs to the archaeal Rpo10/eukaryotic RPB10 RNA polymerase subunit family. As to quaternary structure, part of the RNA polymerase complex. It depends on Zn(2+) as a cofactor.

It is found in the cytoplasm. It catalyses the reaction RNA(n) + a ribonucleoside 5'-triphosphate = RNA(n+1) + diphosphate. Its function is as follows. DNA-dependent RNA polymerase (RNAP) catalyzes the transcription of DNA into RNA using the four ribonucleoside triphosphates as substrates. The protein is DNA-directed RNA polymerase subunit Rpo10 of Methanothermobacter thermautotrophicus (strain ATCC 29096 / DSM 1053 / JCM 10044 / NBRC 100330 / Delta H) (Methanobacterium thermoautotrophicum).